The chain runs to 327 residues: Putative HTH-type transcriptional regulatory protein MmarC6_0210 (327 aa).

An HTH cro/C1-type domain is found at 128-183 (LRETREKLKISVGELAEISRVSRKTIYKYEQNEANPSAEVAIKIEEYLDVPLIKGI). A DNA-binding region (H-T-H motif) is located at residues 139 to 158 (VGELAEISRVSRKTIYKYEQ).

The polypeptide is Putative HTH-type transcriptional regulatory protein MmarC6_0210 (Methanococcus maripaludis (strain C6 / ATCC BAA-1332)).